Consider the following 146-residue polypeptide: 3-dehydroquinate dehydratase (146 aa).

Y23 functions as the Proton acceptor in the catalytic mechanism. N74, H80, and D87 together coordinate substrate. The active-site Proton donor is the H100. Residues 101-102 and R111 each bind substrate; that span reads IS.

The protein belongs to the type-II 3-dehydroquinase family. Homododecamer.

It catalyses the reaction 3-dehydroquinate = 3-dehydroshikimate + H2O. The protein operates within metabolic intermediate biosynthesis; chorismate biosynthesis; chorismate from D-erythrose 4-phosphate and phosphoenolpyruvate: step 3/7. In terms of biological role, catalyzes a trans-dehydration via an enolate intermediate. The protein is 3-dehydroquinate dehydratase of Bacillus cereus (strain ATCC 10987 / NRS 248).